Here is a 43-residue protein sequence, read N- to C-terminus: Protein PsbN (43 aa).

Residues 5–27 form a helical membrane-spanning segment; that stretch reads TLFAISISCLLVSFTGYALYTAF.

This sequence belongs to the PsbN family.

The protein resides in the plastid. Its subcellular location is the chloroplast thylakoid membrane. Its function is as follows. May play a role in photosystem I and II biogenesis. The chain is Protein PsbN from Thuja plicata (Western red-cedar).